A 375-amino-acid chain; its full sequence is Actin-binding Rho-activating protein (375 aa).

Residues alanine 37 to lysine 101 are disordered. Residues proline 80–lysine 101 show a composition bias toward basic and acidic residues. Phosphoserine occurs at positions 150 and 182. The disordered stretch occupies residues glutamate 175–arginine 197. Actin-binding regions lie at residues aspartate 193 to alanine 293 and lysine 294 to glutamate 375. Interaction with actin stretches follow at residues serine 234 to glycine 279 and methionine 346 to glutamate 375.

Binds F-actin and ABLIM1, ABLIM2 and ABLIM3. Interaction with ABLIM2 and ABLIM3 enhances activity. Predominantly expressed in heart and skeletal muscle, and expressed at lower levels in adrenal gland, brain, kidney, liver, and testis.

The protein resides in the cytoplasm. Its subcellular location is the myofibril. It is found in the sarcomere. The protein localises to the cytoskeleton. Its function is as follows. Acts as an activator of serum response factor (SRF)-dependent transcription possibly by inducing nuclear translocation of MKL1 or MKL2 and through a mechanism requiring Rho-actin signaling. In Rattus norvegicus (Rat), this protein is Actin-binding Rho-activating protein.